A 505-amino-acid polypeptide reads, in one-letter code: T-cell activation inhibitor, mitochondrial (505 aa).

The stretch at 216–243 forms a coiled coil; that stretch reads LKNSLPLRKELDRLKNELSELLQLSDIR.

Expressed in peripheral blood leukocytes, mainly in T-lymphocytes.

It is found in the mitochondrion. Functionally, may regulate T-cell apoptosis. This Rattus norvegicus (Rat) protein is T-cell activation inhibitor, mitochondrial (Tcaim).